The sequence spans 535 residues: Phosphoenolpyruvate carboxykinase (ATP) (535 aa).

Substrate contacts are provided by Arg-59, Tyr-201, and Lys-207. ATP is bound by residues Lys-207, His-226, and 243-251 (GLSGTGKTT). Positions 207 and 226 each coordinate Mn(2+). Asp-264 contributes to the Mn(2+) binding site. ATP contacts are provided by residues Glu-292, Arg-328, 444-445 (RI), and Thr-450. A substrate-binding site is contributed by Arg-328.

The protein belongs to the phosphoenolpyruvate carboxykinase (ATP) family. Mn(2+) is required as a cofactor.

The protein resides in the cytoplasm. It catalyses the reaction oxaloacetate + ATP = phosphoenolpyruvate + ADP + CO2. The protein operates within carbohydrate biosynthesis; gluconeogenesis. Involved in the gluconeogenesis. Catalyzes the conversion of oxaloacetate (OAA) to phosphoenolpyruvate (PEP) through direct phosphoryl transfer between the nucleoside triphosphate and OAA. In Porphyromonas gingivalis (strain ATCC 33277 / DSM 20709 / CIP 103683 / JCM 12257 / NCTC 11834 / 2561), this protein is Phosphoenolpyruvate carboxykinase (ATP).